The chain runs to 362 residues: Hydroxycarboxylate dehydrogenase A (362 aa).

The Zn(2+) site is built by Asp-173, His-257, and His-274.

It belongs to the iron-containing alcohol dehydrogenase family. The cofactor is Zn(2+).

The enzyme catalyses 2-hydroxybutanoate + NADP(+) = 2-oxobutanoate + NADPH + H(+). It carries out the reaction 2-hydroxyglutarate + NADP(+) = 2-oxoglutarate + NADPH + H(+). In terms of biological role, catalyzes the NADPH-dependent reduction of 2-oxoglutarate and 2-oxobutanoate, leading to the respective 2-hydroxycarboxylate. Cannot use NADH instead of NADPH as a redox partner. Do not catalyze the reverse reactions. This is Hydroxycarboxylate dehydrogenase A from Escherichia coli (strain K12).